The sequence spans 1450 residues: MIELLKEDDAPKKIGHIQFGLLSEDDIVRLSHVQIVNRELFDLVKRKPTPYGVLDNKLGTSDKQAMCTTCGLSIVDCVGHFGYIKLQLPVFHIGYLKNIMNILQMICKSCSTILLNEEKKQYYLRKMRNKKMDNLQRKSLLKKIFLECRKTKECLKCGSTNGMIKKSGAFKIIHEKYKGKTESLQDYYALYDDAIKYNPEMKSHIKKAQDDLNPLVALNLFKKISYQDIEIMNMDPVIGRPERLILTYMLVPPVSIRPSVPMDGGSGTNEDDLTMKLSEILHINEHIRSNVDRAEMSAIMEDWDYLQASCAIYINSDVPGLPLQMKPTKAVRGLSQRLKGKTGRFRGNLSGKRVDFSGRTVISPDPNLNIDEVAVPQLIALTMTYPERVTDYNIERLQKYVINGPDRHPGANYIIYADGVKKWLKFGNREKFAAELKIGDIVERHIIDGDIMLFNRQPSLHKLSIMSHKARVMPWRTLRFNECVCTPYNADFDGDEMNIHLPQTEEARAEATILMGVTNNLITPRNGEPLVAATQDFLTASYLISRRDAFYERYRFALMCTHFADANEHIDLPPPAILKPVELWTGKQIFEVLLRPSVKSHVLCNFETRSRTYSKNLYMCPKDGYVYFRNSELMCGSIDKSIIGGGNKNSLFHILMRDFSPTIAANCMTRLAKLCARFLGDQGFSIGIPDIKPAEDLDRKKREIIETAYKKCAVFLKDYESGSLQLSSGCSMEQTFEAKMNQTLSQIRDDCGKLCVNDLPNYNSPLIMGLCGSKGSNINIAQMICCVGQQIVNGTRIPNGFTNRTTPHFKHFAKNPKSKGFVSNSFYTGMIPTEFFFHTMGGREGLVDTAVKTAETGYMQRRLMKALEDLSTHYDYTVRDSIGGIVQFIYGDDGLDPAGMEAKDRPVDFLRAMMSVKSTRQCRNEPEMKPFEIRKLVESIIDSSKFEACTDLFKNEIRVFFNGNEKTKGYIQELISLRKQFKLSSFDLNDNEDEIIIEDNSPMDISTTTTTTTTTTTNNAVKITNITTDIEMNESNKEENDKIEKERIEKEKESKRLKLLGERFANEHVVNQIHRITKTQIELFLDICLDKYSRARIEPGTAVGAIGAQSIGEPGTQMTLKTFHFAGVASMNVTLGVPRIKEIINAAKNISTPIITASLNCDYDIRSARIVAGRIEKTTLGHVATHIKEVVKRAGCYLSIKIDKNFVDSLQLEINSKTISQSIASTKGLKLKPEQITTNGDYKLRIVPPANIREGSLYYLQFLKNNLPAVIVKGIPTVNRVVISKVDEKQERYQLLVEGYDLRAVMATPGIKGTHTTSNHIMECENTLGIETARNTIMSEIDMIMTSHGMSIDIRHVMLLADLMSFKGEILGITRFGIAKMKESVLMLASFEKTTDHLFDAAVHHRQDDIVGVSECIIMGVVIPLGTGLFKLLRKSNKNNLPKKSLLLQD.

Residues Cys67, Cys70, Cys77, His80, Cys107, Cys110, and Cys154 each coordinate Zn(2+). Residues Asp491, Asp493, and Asp495 each coordinate Mg(2+). The tract at residues 832–844 is bridging helix; that stretch reads PTEFFFHTMGGRE.

It belongs to the RNA polymerase beta' chain family. As to quaternary structure, component of the RNA polymerase III (Pol III) complex consisting of 17 subunits.

It is found in the nucleus. The enzyme catalyses RNA(n) + a ribonucleoside 5'-triphosphate = RNA(n+1) + diphosphate. Its function is as follows. DNA-dependent RNA polymerase catalyzes the transcription of DNA into RNA using the four ribonucleoside triphosphates as substrates. Largest and catalytic core component of RNA polymerase III which synthesizes small RNAs, such as 5S rRNA and tRNAs. Forms the polymerase active center together with the second largest subunit. A single-stranded DNA template strand of the promoter is positioned within the central active site cleft of Pol III. A bridging helix emanates from RPC1 and crosses the cleft near the catalytic site and is thought to promote translocation of Pol III by acting as a ratchet that moves the RNA-DNA hybrid through the active site by switching from straight to bent conformations at each step of nucleotide addition. The protein is DNA-directed RNA polymerase III subunit rpc1 (polr3a) of Dictyostelium discoideum (Social amoeba).